The following is a 298-amino-acid chain: Probable 2-(5''-triphosphoribosyl)-3'-dephosphocoenzyme-A synthase 2 (298 aa).

The protein belongs to the CitG/MdcB family.

It carries out the reaction 3'-dephospho-CoA + ATP = 2'-(5''-triphospho-alpha-D-ribosyl)-3'-dephospho-CoA + adenine. The protein is Probable 2-(5''-triphosphoribosyl)-3'-dephosphocoenzyme-A synthase 2 of Salmonella typhi.